The chain runs to 927 residues: Translation initiation factor IF-2 (927 aa).

The disordered stretch occupies residues 27 to 338; it reads LGLPVKSHAS…APKPVTERKF (312 aa). Positions 49–69 are enriched in polar residues; sequence SFSSSKTKAPTNSVQTNQGVK. 2 stretches are compositionally biased toward basic and acidic residues: residues 70 to 86 and 101 to 138; these read TESK…DDKP and FKAE…DRRH. A compositionally biased stretch (low complexity) spans 146–159; it reads GNRNDNRQGQQNNR. Basic and acidic residues-rich tracts occupy residues 160 to 171, 202 to 226, and 234 to 257; these read NKNDGRYADHKQ, YSRH…EQEL, and AQEE…KEIV. The span at 300 to 316 shows a compositional bias: low complexity; the sequence is NWNNQNQVRNQRNSNWN. The region spanning 428–597 is the tr-type G domain; it reads ERPPVVTIMG…LLVAEMEELK (170 aa). The segment at 437–444 is G1; sequence GHVDHGKT. GTP is bound at residue 437 to 444; that stretch reads GHVDHGKT. The segment at 462–466 is G2; sequence GITQH. The tract at residues 483 to 486 is G3; the sequence is DTPG. GTP contacts are provided by residues 483-487 and 537-540; these read DTPGH and NKID. Residues 537–540 are G4; the sequence is NKID. The tract at residues 573–575 is G5; the sequence is SAK.

It belongs to the TRAFAC class translation factor GTPase superfamily. Classic translation factor GTPase family. IF-2 subfamily.

The protein resides in the cytoplasm. One of the essential components for the initiation of protein synthesis. Protects formylmethionyl-tRNA from spontaneous hydrolysis and promotes its binding to the 30S ribosomal subunits. Also involved in the hydrolysis of GTP during the formation of the 70S ribosomal complex. The chain is Translation initiation factor IF-2 from Streptococcus agalactiae serotype Ia (strain ATCC 27591 / A909 / CDC SS700).